The sequence spans 105 residues: Thiosulfate sulfurtransferase GlpE (105 aa).

Positions 16 to 104 (DKEDVVIADI…WEAAYSEKVE (89 aa)) constitute a Rhodanese domain. Catalysis depends on C64, which acts as the Cysteine persulfide intermediate.

It belongs to the GlpE family.

It is found in the cytoplasm. It carries out the reaction thiosulfate + hydrogen cyanide = thiocyanate + sulfite + 2 H(+). The enzyme catalyses thiosulfate + [thioredoxin]-dithiol = [thioredoxin]-disulfide + hydrogen sulfide + sulfite + 2 H(+). Transferase that catalyzes the transfer of sulfur from thiosulfate to thiophilic acceptors such as cyanide or dithiols. May function in a CysM-independent thiosulfate assimilation pathway by catalyzing the conversion of thiosulfate to sulfite, which can then be used for L-cysteine biosynthesis. This is Thiosulfate sulfurtransferase GlpE from Pseudoalteromonas translucida (strain TAC 125).